The primary structure comprises 470 residues: Siroheme synthase (470 aa).

The tract at residues 1 to 203 (MEFFPIFLKL…GDEAAARAEM (203 aa)) is precorrin-2 dehydrogenase /sirohydrochlorin ferrochelatase. NAD(+) is bound by residues 22–23 (EV) and 43–44 (PE). Ser128 bears the Phosphoserine mark. The segment at 216 to 470 (GAVYLVGAGP…ENSAVTIQED (255 aa)) is uroporphyrinogen-III C-methyltransferase. Pro225 serves as a coordination point for S-adenosyl-L-methionine. The active-site Proton acceptor is Asp248. Residue Lys270 is the Proton donor of the active site. S-adenosyl-L-methionine is bound by residues 301–303 (GGD), Met383, and Ala412.

This sequence in the N-terminal section; belongs to the precorrin-2 dehydrogenase / sirohydrochlorin ferrochelatase family. It in the C-terminal section; belongs to the precorrin methyltransferase family.

It catalyses the reaction uroporphyrinogen III + 2 S-adenosyl-L-methionine = precorrin-2 + 2 S-adenosyl-L-homocysteine + H(+). The enzyme catalyses precorrin-2 + NAD(+) = sirohydrochlorin + NADH + 2 H(+). It carries out the reaction siroheme + 2 H(+) = sirohydrochlorin + Fe(2+). It participates in cofactor biosynthesis; adenosylcobalamin biosynthesis; precorrin-2 from uroporphyrinogen III: step 1/1. The protein operates within cofactor biosynthesis; adenosylcobalamin biosynthesis; sirohydrochlorin from precorrin-2: step 1/1. Its pathway is porphyrin-containing compound metabolism; siroheme biosynthesis; precorrin-2 from uroporphyrinogen III: step 1/1. It functions in the pathway porphyrin-containing compound metabolism; siroheme biosynthesis; siroheme from sirohydrochlorin: step 1/1. It participates in porphyrin-containing compound metabolism; siroheme biosynthesis; sirohydrochlorin from precorrin-2: step 1/1. Multifunctional enzyme that catalyzes the SAM-dependent methylations of uroporphyrinogen III at position C-2 and C-7 to form precorrin-2 via precorrin-1. Then it catalyzes the NAD-dependent ring dehydrogenation of precorrin-2 to yield sirohydrochlorin. Finally, it catalyzes the ferrochelation of sirohydrochlorin to yield siroheme. The chain is Siroheme synthase from Chromobacterium violaceum (strain ATCC 12472 / DSM 30191 / JCM 1249 / CCUG 213 / NBRC 12614 / NCIMB 9131 / NCTC 9757 / MK).